A 212-amino-acid polypeptide reads, in one-letter code: MNDSSLSPEVTADLEYGLDILELDRAYVVPLLAYLTLLIRWNRTYNLTAIRDPREMVVRHLLDSLAIQRYVTVGRLADLGSGPGLPGIPLAISCPSLQVTLVESNGKKARFLREVVRQLGLSNVGVSEVRAEALDEALMYEHLTARALDTLNGIVTVGGHLLKSEGTLLAMKGAYPHEEIAMLPPHWVVEAVHRLQVPKLTGERHLVIVRKR.

Residues glycine 80, leucine 85, 131-132 (AE), and arginine 146 contribute to the S-adenosyl-L-methionine site.

This sequence belongs to the methyltransferase superfamily. RNA methyltransferase RsmG family.

The protein localises to the cytoplasm. It carries out the reaction guanosine(527) in 16S rRNA + S-adenosyl-L-methionine = N(7)-methylguanosine(527) in 16S rRNA + S-adenosyl-L-homocysteine. Its function is as follows. Specifically methylates the N7 position of guanine in position 527 of 16S rRNA. The sequence is that of Ribosomal RNA small subunit methyltransferase G from Xylella fastidiosa (strain M23).